The chain runs to 156 residues: ATP synthase subunit b 2 (156 aa).

Residues 7–29 (LLGQAISFAIFVWFCMKYVWPPV) traverse the membrane as a helical segment.

Belongs to the ATPase B chain family. In terms of assembly, F-type ATPases have 2 components, F(1) - the catalytic core - and F(0) - the membrane proton channel. F(1) has five subunits: alpha(3), beta(3), gamma(1), delta(1), epsilon(1). F(0) has three main subunits: a(1), b(2) and c(10-14). The alpha and beta chains form an alternating ring which encloses part of the gamma chain. F(1) is attached to F(0) by a central stalk formed by the gamma and epsilon chains, while a peripheral stalk is formed by the delta and b chains.

It is found in the cell inner membrane. In terms of biological role, f(1)F(0) ATP synthase produces ATP from ADP in the presence of a proton or sodium gradient. F-type ATPases consist of two structural domains, F(1) containing the extramembraneous catalytic core and F(0) containing the membrane proton channel, linked together by a central stalk and a peripheral stalk. During catalysis, ATP synthesis in the catalytic domain of F(1) is coupled via a rotary mechanism of the central stalk subunits to proton translocation. Component of the F(0) channel, it forms part of the peripheral stalk, linking F(1) to F(0). The polypeptide is ATP synthase subunit b 2 (Marinomonas sp. (strain MWYL1)).